Consider the following 704-residue polypeptide: Ubiquitin-like modifier-activating enzyme atg7 (704 aa).

The GXGXXG motif signature appears at 372 to 377; it reads GAGTLG. The Glycyl thioester intermediate role is filled by Cys555. The segment at 660 to 699 is homodimerization; the sequence is ALTEKDYITELSGLAEVQRKAEAAANDVEWDSDEEGMEDE. Positions 682-704 are disordered; sequence AAANDVEWDSDEEGMEDEEPELL. A compositionally biased stretch (acidic residues) spans 687–704; that stretch reads VEWDSDEEGMEDEEPELL.

This sequence belongs to the ATG7 family. As to quaternary structure, homodimer. Interacts with ATG8 through a thioester bond between Cys-555 and the C-terminal Gly of ATG8 and with ATG12 through a thioester bond between Cys-555 and the C-terminal Gly of ATG12. Also interacts with ATG3.

Its subcellular location is the cytoplasm. It localises to the preautophagosomal structure. Functionally, E1-like activating enzyme involved in the 2 ubiquitin-like systems required for cytoplasm to vacuole transport (Cvt) and autophagy. Activates ATG12 for its conjugation with ATG5 and ATG8 for its conjugation with phosphatidylethanolamine. Both systems are needed for the ATG8 association to Cvt vesicles and autophagosomes membranes. Autophagy is essential for maintenance of amino acid levels and protein synthesis under nitrogen starvation. Required for selective autophagic degradation of the nucleus (nucleophagy) as well as for mitophagy which contributes to regulate mitochondrial quantity and quality by eliminating the mitochondria to a basal level to fulfill cellular energy requirements and preventing excess ROS production. Required for normal mycelial growth and conidiogenesis, and regulates sclerotial formation. Plays an essential role in pathogenesis. In Botryotinia fuckeliana (strain T4) (Noble rot fungus), this protein is Ubiquitin-like modifier-activating enzyme atg7.